A 323-amino-acid chain; its full sequence is Octaprenyl diphosphate synthase (323 aa).

Isopentenyl diphosphate is bound by residues Lys-45, Arg-48, and His-77. 2 residues coordinate Mg(2+): Asp-84 and Asp-88. Arg-93 serves as a coordination point for an all-trans-polyprenyl diphosphate. Arg-94 is an isopentenyl diphosphate binding site. Lys-170, Thr-171, and Gln-208 together coordinate an all-trans-polyprenyl diphosphate.

Belongs to the FPP/GGPP synthase family. The cofactor is Mg(2+).

The enzyme catalyses 5 isopentenyl diphosphate + (2E,6E)-farnesyl diphosphate = all-trans-octaprenyl diphosphate + 5 diphosphate. Its function is as follows. Supplies octaprenyl diphosphate, the precursor for the side chain of the isoprenoid quinones ubiquinone and menaquinone. The chain is Octaprenyl diphosphate synthase (ispB) from Escherichia coli (strain K12).